The sequence spans 627 residues: Nuclear receptor subfamily 4 group A member 3 (627 aa).

The interval 1–112 (MPCVQAQYSP…HHHHHHHHHQ (112 aa)) is activation function (AF)-1 domain. The segment at 1-139 (MPCVQAQYSP…PSTSMYFKQS (139 aa)) is required for DNA-PK heterotrimer. An interaction with NCOA1, NCOA2, NCOA3 and KAT2B region spans residues 1–292 (MPCVQAQYSP…NRSSSSGEGT (292 aa)). 2 disordered regions span residues 96-162 (HGYH…DELP) and 268-289 (ASSLLGESPSLPSPPNRSSSSG). The span at 97–112 (GYHHHHHHHHHHHHHQ) shows a compositional bias: basic residues. The segment covering 141–150 (PSTPTTPGFP) has biased composition (pro residues). Residues 269–288 (SSLLGESPSLPSPPNRSSSS) are compositionally biased toward low complexity. A DNA-binding region (nuclear receptor) is located at residues 290–365 (EGTCAVCGDN…VGMVKEVVRT (76 aa)). NR C4-type zinc fingers lie at residues 293–313 (CAVCGDNAACQHYGVRTCEGC) and 329–353 (CLANKNCPVDKRRRNRCQYCRFQKC). A disordered region spans residues 365–395 (TDSLKGRRGRLPSKPKSPLQQEPSQPSPPSP). Over residues 378–388 (KPKSPLQQEPS) the composition is skewed to low complexity. The interaction with KAT2B stretch occupies residues 380–627 (KSPLQQEPSQ…DKLFLDTLPF (248 aa)). In terms of domain architecture, NR LBD spans 395 to 624 (PPICMMNALV…SVIDKLFLDT (230 aa)).

It belongs to the nuclear hormone receptor family. NR4 subfamily. Interacts with SIX3 (via homeobox); differentially regulates the transcriptional activities of NR4A3. Interacts with NCOA2; potentiates the activity of the NR4A3. Interacts with NCOA1, NCOA3, MED1 and KAT2B. Interacts with EP300 and NCOA2; mediates the recruitment of MED1 in the coactivator complex. Interacts with the constituents of DNA-PK heterotrimer PRKDC, XRCC6 and XRCC5; phosphorylates and prevents NR4A3 ubiquitinylation and degradation. Interacts with NR3C1 (via nuclear receptor DNA-binding domain); the interactions represses transcription activity of NR4A3 on the POMC promoter Nur response element (NurRE). Interacts with TRIM28; the interactions potentiates NR4A3 activity on NurRE promoter. Binds DNA as a monomer and homodimer. Interacts with PARP1; activates PARP1 by improving acetylation of PARP1 and suppressing the interaction between PARP1 and SIRT1. In terms of processing, phosphorylated by PRKDC. In terms of tissue distribution, ubiquitous. Highest levels of expression in brain. Widely expressed throughout the arcuate nucleus region of the hypothalamus, namely in AgRP neurons.

It is found in the nucleus. Transcriptional activator that binds to regulatory elements in promoter regions in a cell- and response element (target)-specific manner. Induces gene expression by binding as monomers to the NR4A1 response element (NBRE) 5'-AAAAGGTCA-3' site and as homodimers to the Nur response element (NurRE) site in the promoter of their regulated target genes. Plays a role in the regulation of proliferation, survival and differentiation of many different cell types and also in metabolism and inflammation. Mediates proliferation of vascular smooth muscle, myeloid progenitor cell and type B pancreatic cells; promotes mitogen-induced vascular smooth muscle cell proliferation through transactivation of SKP2 promoter by binding a NBRE site. Upon PDGF stimulation, stimulates vascular smooth muscle cell proliferation by regulating CCND1 and CCND2 expression. In islets, induces type B pancreatic cell proliferation through up-regulation of genes that activate cell cycle, as well as genes that cause degradation of the CDKN1A. Negatively regulates myeloid progenitor cell proliferation by repressing RUNX1 in a NBRE site-independent manner. During inner ear, plays a role as a key mediator of the proliferative growth phase of semicircular canal development. Also mediates survival of neuron and smooth muscle cells; mediates CREB-induced neuronal survival, and during hippocampus development, plays a critical role in pyramidal cell survival and axonal guidance. Is required for S phase entry of the cell cycle and survival of smooth muscle cells by inducing CCND1, resulting in RB1 phosphorylation. Binds to NBRE motif in CCND1 promoter, resulting in the activation of the promoter and CCND1 transcription. Also plays a role in inflammation; upon TNF stimulation, mediates monocyte adhesion by inducing the expression of VCAM1 and ICAM1 by binding to the NBRE consensus site. In mast cells activated by Fc-epsilon receptor cross-linking, promotes the synthesis and release of cytokines but impairs events leading to degranulation. Also plays a role in metabolism; by modulating feeding behavior; and by playing a role in energy balance by inhibiting the glucocorticoid-induced orexigenic neuropeptides AGRP expression, at least in part by forming a complex with activated NR3C1 on the AGRP- glucocorticoid response element (GRE), and thus weakening the DNA binding activity of NR3C1. Upon catecholamines stimulation, regulates gene expression that controls oxidative metabolism in skeletal muscle. Plays a role in glucose transport by regulating translocation of the SLC2A4 glucose transporter to the cell surface. Finally, during gastrulation plays a crucial role in the formation of anterior mesoderm by controlling cell migration. Inhibits adipogenesis. Also participates in cardiac hypertrophy by activating PARP1. This is Nuclear receptor subfamily 4 group A member 3 (Nr4a3) from Mus musculus (Mouse).